Consider the following 170-residue polypeptide: Ribosome maturation factor RimP (170 aa).

Belongs to the RimP family.

It is found in the cytoplasm. In terms of biological role, required for maturation of 30S ribosomal subunits. The protein is Ribosome maturation factor RimP of Acidothermus cellulolyticus (strain ATCC 43068 / DSM 8971 / 11B).